The following is a 655-amino-acid chain: Acetyl-coenzyme A synthetase (655 aa).

CoA is bound by residues 196–199 (RGGK) and Thr316. ATP contacts are provided by residues 392-394 (GEP), 416-421 (DTWWQT), Asp507, and Arg522. Residue Ser530 coordinates CoA. Arg533 contributes to the ATP binding site. Mg(2+) contacts are provided by Val544 and Val549. Residue Lys619 is modified to N6-acetyllysine.

Belongs to the ATP-dependent AMP-binding enzyme family. Requires Mg(2+) as cofactor. Post-translationally, acetylated. Deacetylation by the SIR2-homolog deacetylase activates the enzyme.

It carries out the reaction acetate + ATP + CoA = acetyl-CoA + AMP + diphosphate. Functionally, catalyzes the conversion of acetate into acetyl-CoA (AcCoA), an essential intermediate at the junction of anabolic and catabolic pathways. AcsA undergoes a two-step reaction. In the first half reaction, AcsA combines acetate with ATP to form acetyl-adenylate (AcAMP) intermediate. In the second half reaction, it can then transfer the acetyl group from AcAMP to the sulfhydryl group of CoA, forming the product AcCoA. The protein is Acetyl-coenzyme A synthetase of Thiobacillus denitrificans (strain ATCC 25259 / T1).